A 187-amino-acid polypeptide reads, in one-letter code: MNLPPGFRFFPTDEELVVHFLHRKASLLPCHPDVIPDLDLYHYDPWDLPGKALGEGRQWYFYSRKTQERVTSNGYWGSMGMDEPIYTSSTHKKVGIKKYLTFYLGDSQTNWIMQEYSLPDSSSSSSRSSKRSSRASSSSHKPDYSKWVICRVYEQNCSEEEDDDGTELSCLDEVFLSLDDLDEVSLP.

The region spanning 3 to 155 is the NAC domain; it reads LPPGFRFFPT…KWVICRVYEQ (153 aa). The DNA-binding element occupies 94–161; it reads VGIKKYLTFY…VYEQNCSEEE (68 aa). A disordered region spans residues 118–142; the sequence is LPDSSSSSSRSSKRSSRASSSSHKP.

Expressed in root xylem vessels. Expressed in stems, vascular tissue of cauline leaves and tracheary elements of sepals.

It localises to the nucleus. In terms of biological role, probable transcription factor that influences tracheary elements and xylem development by negatively regulating secondary cell wall fiber synthesis and programmed cell death. In Arabidopsis thaliana (Mouse-ear cress), this protein is NAC domain-containing protein 104.